Consider the following 351-residue polypeptide: D-alanine--D-alanine ligase (351 aa).

Residues 141-349 enclose the ATP-grasp domain; the sequence is KAAFSAAGLP…ISQLVARLIE (209 aa). 176-231 serves as a coordination point for ATP; the sequence is ETQLGYPCFIKPANLGSSVGISKAYDKKELLNGLDLAAQLDSRIVVEKNIKARELE. The Mg(2+) site is built by D302, E316, and N318.

This sequence belongs to the D-alanine--D-alanine ligase family. Mg(2+) serves as cofactor. It depends on Mn(2+) as a cofactor.

It is found in the cytoplasm. It catalyses the reaction 2 D-alanine + ATP = D-alanyl-D-alanine + ADP + phosphate + H(+). It functions in the pathway cell wall biogenesis; peptidoglycan biosynthesis. Functionally, cell wall formation. This chain is D-alanine--D-alanine ligase, found in Prochlorococcus marinus (strain SARG / CCMP1375 / SS120).